The primary structure comprises 387 residues: Protein-glutamate methylesterase/protein-glutamine glutaminase 1 (387 aa).

Positions 18 to 136 (RVMVVDDSAV…EISGGTDFRH (119 aa)) constitute a Response regulatory domain. Asp69 bears the 4-aspartylphosphate mark. In terms of domain architecture, CheB-type methylesterase spans 190–387 (PAAEERPDII…AYVLRSANKR (198 aa)). Residues Ser204, His233, and Asp329 contribute to the active site.

This sequence belongs to the CheB family. Post-translationally, phosphorylated by CheA. Phosphorylation of the N-terminal regulatory domain activates the methylesterase activity.

The protein resides in the cytoplasm. The catalysed reaction is [protein]-L-glutamate 5-O-methyl ester + H2O = L-glutamyl-[protein] + methanol + H(+). It carries out the reaction L-glutaminyl-[protein] + H2O = L-glutamyl-[protein] + NH4(+). Involved in chemotaxis. Part of a chemotaxis signal transduction system that modulates chemotaxis in response to various stimuli. Catalyzes the demethylation of specific methylglutamate residues introduced into the chemoreceptors (methyl-accepting chemotaxis proteins or MCP) by CheR. Also mediates the irreversible deamidation of specific glutamine residues to glutamic acid. The polypeptide is Protein-glutamate methylesterase/protein-glutamine glutaminase 1 (Rhodospirillum rubrum (strain ATCC 11170 / ATH 1.1.1 / DSM 467 / LMG 4362 / NCIMB 8255 / S1)).